A 528-amino-acid polypeptide reads, in one-letter code: Protein phosphatase 1 regulatory subunit 16A (528 aa).

Residues 18–45 are a coiled coil; the sequence is STQERLKHAQKRRAQQVKMWAQAEKEAQ. The interval 19-59 is disordered; it reads TQERLKHAQKRRAQQVKMWAQAEKEAQGKKGPGERPRKEAA. Residues 40-58 are compositionally biased toward basic and acidic residues; sequence AEKEAQGKKGPGERPRKEA. ANK repeat units lie at residues 70-99, 103-132, 136-165, 231-260, and 264-293; these read PPSV…SPDL, DGLT…NINA, ECWT…NLLA, HGAT…SLSA, and DGWE…DLNA. Disordered regions lie at residues 330 to 351 and 367 to 421; these read RQRS…VVRR and QEAI…SPVR. A Phosphoserine modification is found at Ser433. Residues 462–505 form a disordered region; the sequence is QRAAAKLQRPPPEGPESPETAEPGLPGDTVTPQPDCGFRAGGDP. Cys524 carries the S-palmitoyl cysteine lipid modification. At Cys525 the chain carries Cysteine methyl ester. Cys525 carries the S-farnesyl cysteine lipid modification. Residues 526–528 constitute a propeptide, removed in mature form; that stretch reads LLM.

As to quaternary structure, binds PP1.

The protein localises to the cell membrane. Its function is as follows. Inhibits protein phosphatase 1 activity toward phosphorylase, myosin light chain and myosin substrates. In Homo sapiens (Human), this protein is Protein phosphatase 1 regulatory subunit 16A (PPP1R16A).